The primary structure comprises 222 residues: MGSPFILLNYKTYNQGTGQGAVEIARACRAVSEESGIEIAVAPQLPDIYRVASEVELPIFSQHMDGVGAGSFTGHVFGKCIKEAGAVGTLINHSERRLTLAEIEASLKAAKEFGLRAVICTNNVPTTAAAAALEPDYVAIEPPELIGSGIPVSKADPEVVSGSVEAVAKINSGVKVLCGAGISKGEDLRAALDLGSQGVLLASGIVKAADPKAALEDLIRLV.

9 to 11 is a binding site for substrate; sequence NYK. The active-site Electrophile is His-93. Glu-141 serves as the catalytic Proton acceptor. Substrate-binding positions include Ile-146, Gly-181, and 202–203; that span reads AS.

This sequence belongs to the triosephosphate isomerase family. As to quaternary structure, homotetramer; dimer of dimers.

It localises to the cytoplasm. It catalyses the reaction D-glyceraldehyde 3-phosphate = dihydroxyacetone phosphate. It functions in the pathway carbohydrate biosynthesis; gluconeogenesis. Its pathway is carbohydrate degradation; glycolysis; D-glyceraldehyde 3-phosphate from glycerone phosphate: step 1/1. Functionally, involved in the gluconeogenesis. Catalyzes stereospecifically the conversion of dihydroxyacetone phosphate (DHAP) to D-glyceraldehyde-3-phosphate (G3P). The protein is Triosephosphate isomerase of Methanosarcina acetivorans (strain ATCC 35395 / DSM 2834 / JCM 12185 / C2A).